We begin with the raw amino-acid sequence, 668 residues long: Probable 6-phosphofructo-2-kinase PB17E12.14c (668 aa).

A compositionally biased stretch (basic and acidic residues) spans 1–14 (MSNNNNKDDSELQS). 2 disordered regions span residues 1 to 105 (MSNN…GSRP) and 136 to 185 (HRVP…EATN). 3 stretches are compositionally biased toward polar residues: residues 46 to 56 (NDHSFTNTDSV), 65 to 86 (SPVS…QNSP), and 164 to 184 (SSMS…SEAT). 197–204 (GLPARGKS) lines the ATP pocket. Residues aspartate 281 and cysteine 312 contribute to the active site. Arginine 346 contacts beta-D-fructose 6-phosphate. Residue glutamate 540 is part of the active site. Residue histidine 608 is the Proton donor of the active site.

It carries out the reaction beta-D-fructose 6-phosphate + ATP = beta-D-fructose 2,6-bisphosphate + ADP + H(+). In terms of biological role, synthesis of fructose 2,6-bisphosphate. The sequence is that of Probable 6-phosphofructo-2-kinase PB17E12.14c from Schizosaccharomyces pombe (strain 972 / ATCC 24843) (Fission yeast).